A 407-amino-acid chain; its full sequence is Tryptophan synthase beta chain (407 aa).

Lys91 bears the N6-(pyridoxal phosphate)lysine mark.

This sequence belongs to the TrpB family. Tetramer of two alpha and two beta chains. Pyridoxal 5'-phosphate is required as a cofactor.

The enzyme catalyses (1S,2R)-1-C-(indol-3-yl)glycerol 3-phosphate + L-serine = D-glyceraldehyde 3-phosphate + L-tryptophan + H2O. It participates in amino-acid biosynthesis; L-tryptophan biosynthesis; L-tryptophan from chorismate: step 5/5. In terms of biological role, the beta subunit is responsible for the synthesis of L-tryptophan from indole and L-serine. This chain is Tryptophan synthase beta chain, found in Streptococcus pneumoniae (strain Hungary19A-6).